The chain runs to 77 residues: Translation initiation factor IF-1, chloroplastic (77 aa).

The S1-like domain maps to 1-71 (MKEQKWIHEG…TRGRIIYRLR (71 aa)).

It belongs to the IF-1 family. Component of the 30S ribosomal translation pre-initiation complex which assembles on the 30S ribosome in the order IF-2 and IF-3, IF-1 and N-formylmethionyl-tRNA(fMet); mRNA recruitment can occur at any time during PIC assembly.

It localises to the plastid. The protein localises to the chloroplast. Its function is as follows. One of the essential components for the initiation of protein synthesis. Stabilizes the binding of IF-2 and IF-3 on the 30S subunit to which N-formylmethionyl-tRNA(fMet) subsequently binds. Helps modulate mRNA selection, yielding the 30S pre-initiation complex (PIC). Upon addition of the 50S ribosomal subunit IF-1, IF-2 and IF-3 are released leaving the mature 70S translation initiation complex. In Brexia madagascariensis, this protein is Translation initiation factor IF-1, chloroplastic.